Here is a 464-residue protein sequence, read N- to C-terminus: Asparagine--tRNA ligase (464 aa).

The protein belongs to the class-II aminoacyl-tRNA synthetase family. In terms of assembly, homodimer.

The protein localises to the cytoplasm. It catalyses the reaction tRNA(Asn) + L-asparagine + ATP = L-asparaginyl-tRNA(Asn) + AMP + diphosphate + H(+). The protein is Asparagine--tRNA ligase of Cytophaga hutchinsonii (strain ATCC 33406 / DSM 1761 / CIP 103989 / NBRC 15051 / NCIMB 9469 / D465).